The chain runs to 514 residues: Histidine ammonia-lyase (514 aa).

A cross-link (5-imidazolinone (Cys-Gly)) is located at residues 143–145; sequence CSG. Position 144 is a 2,3-didehydroalanine (Ser) (serine 144).

It belongs to the PAL/histidase family. Contains an active site 4-methylidene-imidazol-5-one (MIO), which is formed autocatalytically by cyclization and dehydration of residues Cys-Ser-Gly.

It is found in the cytoplasm. It carries out the reaction L-histidine = trans-urocanate + NH4(+). It functions in the pathway amino-acid degradation; L-histidine degradation into L-glutamate; N-formimidoyl-L-glutamate from L-histidine: step 1/3. The chain is Histidine ammonia-lyase (hutH) from Streptomyces griseus.